An 89-amino-acid polypeptide reads, in one-letter code: Small ribosomal subunit protein uS14 (89 aa).

It belongs to the universal ribosomal protein uS14 family. As to quaternary structure, part of the 30S ribosomal subunit. Contacts proteins S3 and S10.

Functionally, binds 16S rRNA, required for the assembly of 30S particles and may also be responsible for determining the conformation of the 16S rRNA at the A site. The protein is Small ribosomal subunit protein uS14 of Onion yellows phytoplasma (strain OY-M).